We begin with the raw amino-acid sequence, 616 residues long: Bifunctional 2-aminoethylphosphonate cytidylyltransferase/aminotransferase (616 aa).

Residues 1 to 240 form a 2-aminoethylphosphonate cytidylyltransferase region; it reads MIKQAVILAG…VKNIYPHIVE (240 aa). CMP-(2-aminoethyl)phosphonate contacts are provided by Leu8, Gly10, Gly11, Lys25, Thr83, Thr88, Glu104, and Ser105. 2 residues coordinate Mg(2+): Asp106 and Asp136. The CMP-(2-aminoethyl)phosphonate site is built by Asp136, Lys153, and Glu196. Residues Glu220 and Asp222 each coordinate Mg(2+). A 2-aminoethylphosphonate aminotransferase region spans residues 250–616; sequence EVLLNPGPAT…EYMNGIGVGV (367 aa). The pyridoxal 5'-phosphate site is built by Ser313, Gly314, Thr315, Thr390, Lys441, and Thr490.

The protein in the N-terminal section; belongs to the LicC/PntC cytidylyltransferase family. This sequence in the C-terminal section; belongs to the class-V pyridoxal-phosphate-dependent aminotransferase family. PhnW subfamily. As to quaternary structure, homodimer. It depends on Mg(2+) as a cofactor. Requires Zn(2+) as cofactor. Pyridoxal 5'-phosphate is required as a cofactor.

It catalyses the reaction (2-aminoethyl)phosphonate + CTP = CMP-(2-aminoethyl)phosphonate + diphosphate. It carries out the reaction (2-aminoethyl)phosphonate + pyruvate = phosphonoacetaldehyde + L-alanine. It functions in the pathway phosphorus metabolism; phosphonate biosynthesis. Its activity is regulated as follows. Cytidylyltransferase activity is inhibited in the presence of EDTA and is restored by the addition of Mg(2+) or Zn(2+). In terms of biological role, bifunctional transferase involved in the biosynthesis of cell-surface phosphonates. The aminotransferase region catalyzes the transformation of phosphonoacetaldehyde (PnAA) to 2-aminoethylphosphonate (AEP). The cytidylyltransferase region catalyzes the activation of 2-aminoethylphosphonate (AEP) to CMP-2-aminoethylphosphonate (CMP-AEP). Cannot use phosphocholine. Exhibits strong activity towards CTP, limited activity towards ATP and no activity with GTP. This is Bifunctional 2-aminoethylphosphonate cytidylyltransferase/aminotransferase from Treponema denticola (strain ATCC 35405 / DSM 14222 / CIP 103919 / JCM 8153 / KCTC 15104).